A 481-amino-acid polypeptide reads, in one-letter code: MQWETVIGLEIHAQLATQSKIFSGSSTAFGAAPNTQASLVDLAMPGTLPVLNEEAVRMACLFGLAIDARIDRQNVFARKNYFYPDLPKGYQTSQMDHPIVGKGHLDITLEDGTTKRIGITRAHLEEDAGKSLHEDFQGMSGIDLNRAGTPLLEIVSEPDIRSAKEAVAYVKAIHALVRYLGICDGNMAEGSLRCDCNVSVRPKGQAEFGTRAEIKNVNSFRFIEKAINHEIQRQIELIEDGGKVVQETRLYDPNKDETRSMRGKEEANDYRYFPCPDLLPVVIEPEYLAKLREQLPELPVQKRERFESQYGLSAYDASVLSASREMADYFEKVQGICGDAKLAANWVMVELGSLLNKDGLEIEQSPVSAEQLGGMILRIKDNTISGKLAKMVFEAMANGEGSADQIIEAKGLKQVTDSGAIEKMLDEVLAANAEQVEQYRAADEAKRGKMFGFFVGQAMKASKGKANPQQVNELLKKKLEA.

Belongs to the GatB/GatE family. GatB subfamily. In terms of assembly, heterotrimer of A, B and C subunits.

It carries out the reaction L-glutamyl-tRNA(Gln) + L-glutamine + ATP + H2O = L-glutaminyl-tRNA(Gln) + L-glutamate + ADP + phosphate + H(+). The enzyme catalyses L-aspartyl-tRNA(Asn) + L-glutamine + ATP + H2O = L-asparaginyl-tRNA(Asn) + L-glutamate + ADP + phosphate + 2 H(+). Allows the formation of correctly charged Asn-tRNA(Asn) or Gln-tRNA(Gln) through the transamidation of misacylated Asp-tRNA(Asn) or Glu-tRNA(Gln) in organisms which lack either or both of asparaginyl-tRNA or glutaminyl-tRNA synthetases. The reaction takes place in the presence of glutamine and ATP through an activated phospho-Asp-tRNA(Asn) or phospho-Glu-tRNA(Gln). This Pseudomonas aeruginosa (strain LESB58) protein is Aspartyl/glutamyl-tRNA(Asn/Gln) amidotransferase subunit B.